Reading from the N-terminus, the 551-residue chain is MGSETITQGFKRAPHRSLLYALGLDEKELEKPIIGIASSYSEIIPGHKHLDKIAEAVKYGVYSAGGTPVIFSTIGVCDGIAMGHSGMKYSLASREIIADSVETVVRAHQFDGLVLVPNCDKIVPGMLMAAARLDIPAIVVSGGPMLAGDYQGKSLDLHNVFEAVGEVKAGKITEGELENIEKAACPGCGSCAGMFTANSMNCLTEVLGMALPGNGTIPAVYAERIRLAKKSGRQIINLVEKNIKPSDIMTREAFKNAICVDMALGCSTNTALHLPAIAHEAGLDLELDLFNDISRKVPHICSLTPAGIYHIEDLYRVGGIPAVMKELSEKDLIQLDQLTVTGDTVGTNISRVGYIDHKIIRPVSNPYHNQGGLAVLKGNIAPGGSVVKQAAVADSMMVHRGPARVFKGEEEAVDAIINGQISEGDVVVITYEGPRGGPGMREMLTPTSALAGLGLDDKVALITDGRFSGATRGAAIGHVSPEAASGGPIGIIQDGDIIEIDIPAKSLNVDISEEEFEKRMSNFNPELPDISGYLGRYAKHVSSASTGAVLE.

Mg(2+) is bound at residue D78. C119 is a binding site for [2Fe-2S] cluster. 2 residues coordinate Mg(2+): D120 and K121. Position 121 is an N6-carboxylysine (K121). C191 provides a ligand contact to [2Fe-2S] cluster. E442 lines the Mg(2+) pocket. The Proton acceptor role is filled by S468.

It belongs to the IlvD/Edd family. In terms of assembly, homodimer. Requires [2Fe-2S] cluster as cofactor. Mg(2+) serves as cofactor.

The enzyme catalyses (2R)-2,3-dihydroxy-3-methylbutanoate = 3-methyl-2-oxobutanoate + H2O. It carries out the reaction (2R,3R)-2,3-dihydroxy-3-methylpentanoate = (S)-3-methyl-2-oxopentanoate + H2O. It functions in the pathway amino-acid biosynthesis; L-isoleucine biosynthesis; L-isoleucine from 2-oxobutanoate: step 3/4. It participates in amino-acid biosynthesis; L-valine biosynthesis; L-valine from pyruvate: step 3/4. Its function is as follows. Functions in the biosynthesis of branched-chain amino acids. Catalyzes the dehydration of (2R,3R)-2,3-dihydroxy-3-methylpentanoate (2,3-dihydroxy-3-methylvalerate) into 2-oxo-3-methylpentanoate (2-oxo-3-methylvalerate) and of (2R)-2,3-dihydroxy-3-methylbutanoate (2,3-dihydroxyisovalerate) into 2-oxo-3-methylbutanoate (2-oxoisovalerate), the penultimate precursor to L-isoleucine and L-valine, respectively. In Halothermothrix orenii (strain H 168 / OCM 544 / DSM 9562), this protein is Dihydroxy-acid dehydratase.